A 273-amino-acid chain; its full sequence is ATP synthase subunit a (273 aa).

5 helical membrane-spanning segments follow: residues tryptophan 44–tyrosine 64, isoleucine 104–isoleucine 124, aspartate 149–isoleucine 169, leucine 223–tryptophan 243, and alanine 244–valine 264.

This sequence belongs to the ATPase A chain family. As to quaternary structure, F-type ATPases have 2 components, CF(1) - the catalytic core - and CF(0) - the membrane proton channel. CF(1) has five subunits: alpha(3), beta(3), gamma(1), delta(1), epsilon(1). CF(0) has three main subunits: a(1), b(2) and c(9-12). The alpha and beta chains form an alternating ring which encloses part of the gamma chain. CF(1) is attached to CF(0) by a central stalk formed by the gamma and epsilon chains, while a peripheral stalk is formed by the delta and b chains.

Its subcellular location is the cell inner membrane. Key component of the proton channel; it plays a direct role in the translocation of protons across the membrane. This Shewanella putrefaciens (strain CN-32 / ATCC BAA-453) protein is ATP synthase subunit a.